The following is a 218-amino-acid chain: MDDDVLKRIGVLSKFITDEKKARIEKVLNLRTNYLTFVLEDIFQSQNASATIRTGEILGLSDVHVIEKKNKHTLNPDVTLGSSQWINLNKYKNAKFAIDRLKSDGYSIVATSLNPKSINLENLTINNKMAIFFGTELTGLSAEVLGAADLYVKIPMYGFTQSYNISVAVAIVMYSLLMRLRKSSIDYLLNEAEKSNLRLKYYRQVVKNYQFIENLINS.

Residues T111 and I154 each coordinate S-adenosyl-L-methionine.

This sequence belongs to the class IV-like SAM-binding methyltransferase superfamily. RNA methyltransferase TrmH family.

It catalyses the reaction guanosine(18) in tRNA + S-adenosyl-L-methionine = 2'-O-methylguanosine(18) in tRNA + S-adenosyl-L-homocysteine + H(+). In terms of biological role, catalyzes the 2'-O methylation of guanosine at position 18 in tRNA. This is tRNA (guanosine(18)-2'-O)-methyltransferase from Borreliella burgdorferi (strain ATCC 35210 / DSM 4680 / CIP 102532 / B31) (Borrelia burgdorferi).